Reading from the N-terminus, the 375-residue chain is Acetylornithine aminotransferase (375 aa).

Residues 93–94 and F120 each bind pyridoxal 5'-phosphate; that span reads GT. Position 123 (R123) interacts with N(2)-acetyl-L-ornithine. Residue 205–208 coordinates pyridoxal 5'-phosphate; the sequence is DEVQ. Residue K234 is modified to N6-(pyridoxal phosphate)lysine. T262 is a binding site for N(2)-acetyl-L-ornithine. T263 is a pyridoxal 5'-phosphate binding site.

Belongs to the class-III pyridoxal-phosphate-dependent aminotransferase family. ArgD subfamily. In terms of assembly, homodimer. Pyridoxal 5'-phosphate is required as a cofactor.

The protein localises to the cytoplasm. It carries out the reaction N(2)-acetyl-L-ornithine + 2-oxoglutarate = N-acetyl-L-glutamate 5-semialdehyde + L-glutamate. It participates in amino-acid biosynthesis; L-arginine biosynthesis; N(2)-acetyl-L-ornithine from L-glutamate: step 4/4. In Staphylococcus epidermidis (strain ATCC 12228 / FDA PCI 1200), this protein is Acetylornithine aminotransferase.